Reading from the N-terminus, the 131-residue chain is MHELSVALSLIDALTESLGTHPDVRIEVIHLKIGPLSGVIEPALRSAFEIAAVGTIAEGAILAIQVPPIVLRCEECGQETNLSGADVMDNRDGLGSWISWLPPACPACGAAALTVVGGRELELVAAEVRRG.

His2 contacts Ni(2+). The Zn(2+) site is built by Cys73, Cys76, Cys105, and Cys108.

The protein belongs to the HypA/HybF family.

Involved in the maturation of [NiFe] hydrogenases. Required for nickel insertion into the metal center of the hydrogenase. This chain is Hydrogenase maturation factor HypA, found in Thermomicrobium roseum (strain ATCC 27502 / DSM 5159 / P-2).